The sequence spans 370 residues: MQSYGNPDVTYEWWAGNSVVTSRSGRFIASHIGHTGLIAFAAGGSTLWELARYNPEIPMGHQSSLFLGHLAAFGVGFDEAGAWTGVGVAAVAIVHLVLSMVYGGGALLHAVYFEADVADSEVPRARKFKLEWNNPDNQTFILGHHLFFFGMACIAFVEWARIHGIYDPAIGSVRQVNYNLDLTMIWNRQFDFIGIDSLEDVMGGHAFLAFAELTGATIHMVAGSTQWENKRLGEWSKYKGAELLSAEAVLSWSLAGIGWMAIVAAFWAATNTTVYPIEWFGEPLKLQFSVAPYWIDTADSTGITAFFGHTTRAALVNVHYYFGFFFLQGHFWHALRALGFDFKKVSEAIGNTEGATVRVEGAGFNGRAPR.

The next 6 membrane-spanning stretches (helical) occupy residues 27 to 47, 88 to 108, 140 to 160, 201 to 221, 248 to 268, and 315 to 335; these read FIASHIGHTGLIAFAAGGSTL, VAAVAIVHLVLSMVYGGGALL, FILGHHLFFFGMACIAFVEWA, VMGGHAFLAFAELTGATIHMV, AVLSWSLAGIGWMAIVAAFWA, and LVNVHYYFGFFFLQGHFWHAL.

It belongs to the PsbB/PsbC family. IsiA/Pcb subfamily. The antenna complex consists of divinyl chlorophylls (a and b) and divinyl chlorophyll a/b binding proteins and binds more divinyl chlorophyll b than does the antenna complex from high-light-adapted Prochlorococcus. Divinyl chlorophyll a is required as a cofactor. Requires divinyl chlorophyll b as cofactor.

It localises to the cellular thylakoid membrane. Functionally, the antenna complex functions as a light receptor, it captures and delivers excitation energy to photosystems II and I. The Prochlorales pcb genes are not related to higher plant LHCs. The polypeptide is Divinyl chlorophyll a/b light-harvesting protein PcbD (pcbD) (Prochlorococcus marinus (strain NATL2A)).